The chain runs to 132 residues: Interleukin-13 (132 aa).

Positions 1–18 (MALLLTAVIVLICFGGLT) are cleaved as a signal peptide. 4 N-linked (GlcNAc...) asparagine glycosylation sites follow: asparagine 38, asparagine 49, asparagine 57, and asparagine 75. 2 disulfide bridges follow: cysteine 48–cysteine 76 and cysteine 64–cysteine 90.

Belongs to the IL-4/IL-13 family. As to quaternary structure, interacts with IL13RA2.

The protein localises to the secreted. Cytokine that plays important roles in allergic inflammation and immune response to parasite infection. Synergizes with IL2 in regulating interferon-gamma synthesis. Stimulates B-cell proliferation, and activation of eosinophils, basophils, and mast cells. Plays an important role in controlling IL33 activity by modulating the production of transmembrane and soluble forms of interleukin-1 receptor-like 1/IL1RL1. Displays the capacity to antagonize Th1-driven proinflammatory immune response and downregulates synthesis of many proinflammatory cytokines including IL1, IL6, IL10, IL12 and TNF-alpha through a mechanism that partially involves suppression of NF-kappa-B. Also functions on nonhematopoietic cells, including endothelial cells where it induces vascular cell adhesion protein 1/VCAM1, which is important in the recruitment of eosinophils. Exerts its biological effects through its receptors which comprises the IL4R chain and the IL13RA1 chain, to activate JAK1 and TYK2, leading to the activation of STAT6. Aside from IL13RA1, another receptor IL13RA2 acts as a high affinity decoy for IL13 and mediates internalization and depletion of extracellular IL13. In Bos taurus (Bovine), this protein is Interleukin-13 (IL13).